Reading from the N-terminus, the 191-residue chain is Adenylate kinase (191 aa).

10 to 15 (AAGKGT) provides a ligand contact to ATP. The interval 30–59 (STGDMLRAAIASGSELGQRVKGVLDRGELV) is NMP. AMP contacts are provided by residues threonine 31, arginine 36, 57-59 (ELV), 85-88 (GFPR), and glutamine 92. The segment at 126-136 (KRFEEQGRPDD) is LID. Arginine 127 contributes to the ATP binding site. Positions 133 and 144 each coordinate AMP. Residue glycine 172 participates in ATP binding.

Belongs to the adenylate kinase family. In terms of assembly, monomer.

The protein localises to the cytoplasm. The enzyme catalyses AMP + ATP = 2 ADP. It functions in the pathway purine metabolism; AMP biosynthesis via salvage pathway; AMP from ADP: step 1/1. Its function is as follows. Catalyzes the reversible transfer of the terminal phosphate group between ATP and AMP. Plays an important role in cellular energy homeostasis and in adenine nucleotide metabolism. The polypeptide is Adenylate kinase (Caulobacter vibrioides (strain ATCC 19089 / CIP 103742 / CB 15) (Caulobacter crescentus)).